Here is a 266-residue protein sequence, read N- to C-terminus: Glucosamine-6-phosphate deaminase (266 aa).

The active-site Proton acceptor; for enolization step is the Asp72. Asp141 acts as the For ring-opening step in catalysis. His143 acts as the Proton acceptor; for ring-opening step in catalysis. The active-site For ring-opening step is the Glu148.

The protein belongs to the glucosamine/galactosamine-6-phosphate isomerase family. NagB subfamily. In terms of assembly, homohexamer.

The catalysed reaction is alpha-D-glucosamine 6-phosphate + H2O = beta-D-fructose 6-phosphate + NH4(+). The protein operates within amino-sugar metabolism; N-acetylneuraminate degradation; D-fructose 6-phosphate from N-acetylneuraminate: step 5/5. Its activity is regulated as follows. Allosterically activated by N-acetylglucosamine 6-phosphate (GlcNAc6P). Catalyzes the reversible isomerization-deamination of glucosamine 6-phosphate (GlcN6P) to form fructose 6-phosphate (Fru6P) and ammonium ion. This chain is Glucosamine-6-phosphate deaminase, found in Klebsiella pneumoniae subsp. pneumoniae (strain ATCC 700721 / MGH 78578).